A 59-amino-acid chain; its full sequence is MAFDKKLLDIVACPVCKGKLEYDKTAQQLICKADKLAYPITEGIPVLLENRATPITETV.

This sequence belongs to the UPF0434 family.

The protein is UPF0434 protein Sputw3181_2540 of Shewanella sp. (strain W3-18-1).